The primary structure comprises 531 residues: Probable rhamnogalacturonate lyase A (531 aa).

Positions 1–20 (MLSKTSLLSLLSLAAGVVNA) are cleaved as a signal peptide. Intrachain disulfides connect C50/C93 and C184/C193.

Belongs to the polysaccharide lyase 4 family.

The protein resides in the secreted. The catalysed reaction is Endotype eliminative cleavage of L-alpha-rhamnopyranosyl-(1-&gt;4)-alpha-D-galactopyranosyluronic acid bonds of rhamnogalacturonan I domains in ramified hairy regions of pectin leaving L-rhamnopyranose at the reducing end and 4-deoxy-4,5-unsaturated D-galactopyranosyluronic acid at the non-reducing end.. Pectinolytic enzymes consist of four classes of enzymes: pectin lyase, polygalacturonase, pectin methylesterase and rhamnogalacturonase. Degrades the rhamnogalacturonan I (RG-I) backbone of pectin. This Aspergillus niger (strain ATCC MYA-4892 / CBS 513.88 / FGSC A1513) protein is Probable rhamnogalacturonate lyase A (rglA).